Reading from the N-terminus, the 376-residue chain is N-acetyldiaminopimelate deacetylase (376 aa).

The active site involves Asp-69. Catalysis depends on Glu-128, which acts as the Proton acceptor.

Belongs to the peptidase M20A family. N-acetyldiaminopimelate deacetylase subfamily.

It carries out the reaction N-acetyl-(2S,6S)-2,6-diaminopimelate + H2O = (2S,6S)-2,6-diaminopimelate + acetate. It functions in the pathway amino-acid biosynthesis; L-lysine biosynthesis via DAP pathway; LL-2,6-diaminopimelate from (S)-tetrahydrodipicolinate (acetylase route): step 3/3. In terms of biological role, catalyzes the conversion of N-acetyl-diaminopimelate to diaminopimelate and acetate. The polypeptide is N-acetyldiaminopimelate deacetylase (Bacillus cereus (strain B4264)).